The primary structure comprises 154 residues: Deoxyuridine 5'-triphosphate nucleotidohydrolase (154 aa).

Residues 68 to 70 (RSG), N81, and 85 to 87 (TID) contribute to the substrate site.

Belongs to the dUTPase family. Requires Mg(2+) as cofactor.

The catalysed reaction is dUTP + H2O = dUMP + diphosphate + H(+). The protein operates within pyrimidine metabolism; dUMP biosynthesis; dUMP from dCTP (dUTP route): step 2/2. This enzyme is involved in nucleotide metabolism: it produces dUMP, the immediate precursor of thymidine nucleotides and it decreases the intracellular concentration of dUTP so that uracil cannot be incorporated into DNA. The sequence is that of Deoxyuridine 5'-triphosphate nucleotidohydrolase from Acidiphilium cryptum (strain JF-5).